The chain runs to 652 residues: Acetyl-coenzyme A synthetase (652 aa).

Residues 191–194 (RAGR), Thr-311, and Asn-335 each bind CoA. ATP-binding positions include 387-389 (GEP), 411-416 (DTWWQT), Asp-500, and Arg-515. Residue Ser-523 participates in CoA binding. ATP is bound at residue Arg-526. Residues Val-537, His-539, and Ile-542 each coordinate Mg(2+). CoA is bound at residue Arg-584. Lys-609 is modified (N6-acetyllysine).

It belongs to the ATP-dependent AMP-binding enzyme family. It depends on Mg(2+) as a cofactor. Acetylated. Deacetylation by the SIR2-homolog deacetylase activates the enzyme.

The catalysed reaction is acetate + ATP + CoA = acetyl-CoA + AMP + diphosphate. Catalyzes the conversion of acetate into acetyl-CoA (AcCoA), an essential intermediate at the junction of anabolic and catabolic pathways. Acs undergoes a two-step reaction. In the first half reaction, Acs combines acetate with ATP to form acetyl-adenylate (AcAMP) intermediate. In the second half reaction, it can then transfer the acetyl group from AcAMP to the sulfhydryl group of CoA, forming the product AcCoA. Its function is as follows. Enables the cell to use acetate during aerobic growth to generate energy via the TCA cycle, and biosynthetic compounds via the glyoxylate shunt. Acetylates CheY, the response regulator involved in flagellar movement and chemotaxis. This is Acetyl-coenzyme A synthetase from Cronobacter sakazakii (strain ATCC BAA-894) (Enterobacter sakazakii).